The primary structure comprises 514 residues: Mitochondrial-processing peptidase subunit alpha (514 aa).

The N-terminal 55 residues, 1–55 (MLLRKSIPYIKICRDISASVRNNKEIAQKLPLSVPLPMENNSKSIEKGCPPMGRN), are a transit peptide targeting the mitochondrion.

This sequence belongs to the peptidase M16 family. Heterodimer of mppa-1 (alpha) and mppb-1 (beta) subunits, forming the mitochondrial processing protease (MPP) in which mppa-1 is involved in substrate recognition and binding and mppb-1 is the catalytic subunit.

The protein localises to the mitochondrion matrix. Functionally, substrate recognition and binding subunit of the essential mitochondrial processing protease (MPP), which cleaves the mitochondrial sequence off newly imported precursors proteins. This chain is Mitochondrial-processing peptidase subunit alpha, found in Caenorhabditis elegans.